Consider the following 519-residue polypeptide: Cytochrome P450 52A10 (519 aa).

Cysteine 466 lines the heme pocket.

The protein belongs to the cytochrome P450 family. Heme is required as a cofactor.

The protein resides in the membrane. Together with an NADPH cytochrome P450 the enzyme system catalyzes the terminal hydroxylation as the first step in the assimilation of alkanes and fatty acids. The polypeptide is Cytochrome P450 52A10 (CYP52A10) (Candida maltosa (Yeast)).